A 313-amino-acid polypeptide reads, in one-letter code: Protein sprouty homolog 1 (313 aa).

Met1 carries the post-translational modification N-acetylmethionine. The tract at residues 43-152 is disordered; the sequence is QIKAIRGSNE…RSDRVIRTQP (110 aa). The segment covering 69 to 79 has biased composition (basic and acidic residues); sequence PRPEKQERTHE. Positions 106 to 125 are enriched in low complexity; it reads SRSTSTGSAASSGSSSSVSS. In terms of domain architecture, SPR spans 177–289; sequence QCGKCKCGEC…CYDWTHRPGC (113 aa).

This sequence belongs to the sprouty family. Forms heterodimers with SPRY2. Interacts with TESK1. Interacts with CAV1 (via C-terminus).

Its subcellular location is the cytoplasm. The protein localises to the membrane. In terms of biological role, inhibits fibroblast growth factor (FGF)-induced retinal lens fiber differentiation, probably by inhibiting FGF-mediated phosphorylation of ERK1/2. Inhibits TGFB-induced epithelial-to-mesenchymal transition in lens epithelial cells. This Mus musculus (Mouse) protein is Protein sprouty homolog 1 (Spry1).